A 528-amino-acid chain; its full sequence is MFSLQDLCRKNTFFLPSDFSKHTLHLLGLYWKGHGSIQRIKNDGVLIEHDLLLSINEALILAGEEGNNDVVQLLLLWEGNLHYAIIGALRTEKYGLICEYHSQIQDWHVLLPLIQDPETFEKCHDLSLECDLSCLLQHAVKYNMLSILVKYKEDLLNVLFRQQIQGLFILACENRKLEILTWMGQNLPIPDPEPIFNIAVVTKDLEMFSLGYKIVFEYMENQGLFHLTQVVRMVMINRHFSMVINKGLLPFVLEILKHGGHVNRALSYAVTQNKRKILDHVVRQKNVPHKTIERMLHLAVKKHAPRKTLNLLLSYINYKVKNVKKLLEHVVKYNSTLVIRILLEKKKNLLDATLTRYVKDSTYFRVKEFMQDFSISPEKFIKIAVREQKNVLIKAICEDIWENPAERIRNLKQIVCTIKYESGRQFLINIIHTIYQSYSLKPEEILKLATFYVKHNATTHFKDLCKYLWLNRGTESKKLFLECLEIADKKEFPDIKSIVSEYINYLFTAGAITKEEIMRVYALEYAMY.

ANK repeat units lie at residues 129–158 (ECDL…LLNV), 261–290 (HVNR…VPHK), and 292–322 (IERM…KVKN).

It belongs to the asfivirus MGF 505 family. In terms of assembly, interacts with host STING1. Interacts with host JAK1; this interaction leads to JAK1 degradation. Interacts with host JAK2; this interaction leads to JAK2 degradation. Interacts with host RELA; this interaction inhibits NF-kappa-B promoter activity.

The protein resides in the host cytoplasm. Plays a role in virus cell tropism, and may be required for efficient virus replication in macrophages. Interferes with host NF-kappa-B promoter activity mediated by TLR8. Mechanistically, inhibits the phosphorylation and subsequent nuclear translocation of host NF-kappa-B RELA subunit downstream of TLR8. Promotes the expression of the autophagy-related protein host ULK1 to degrade host STING and inhibit the interferon response. Also inhibits JAK1- and JAK2-mediated signaling and thus negatively regulates the IFN-gamma signaling. The chain is Protein MGF 505-7R from Ornithodoros (relapsing fever ticks).